A 237-amino-acid chain; its full sequence is Phosphoribosylaminoimidazole-succinocarboxamide synthase (237 aa).

This sequence belongs to the SAICAR synthetase family.

The enzyme catalyses 5-amino-1-(5-phospho-D-ribosyl)imidazole-4-carboxylate + L-aspartate + ATP = (2S)-2-[5-amino-1-(5-phospho-beta-D-ribosyl)imidazole-4-carboxamido]succinate + ADP + phosphate + 2 H(+). The protein operates within purine metabolism; IMP biosynthesis via de novo pathway; 5-amino-1-(5-phospho-D-ribosyl)imidazole-4-carboxamide from 5-amino-1-(5-phospho-D-ribosyl)imidazole-4-carboxylate: step 1/2. The polypeptide is Phosphoribosylaminoimidazole-succinocarboxamide synthase (Enterococcus faecalis (strain ATCC 700802 / V583)).